The chain runs to 41 residues: MKVLSSLKSAKARHRDCKVVRRRGKIFVICKSNPRFKARQR.

Belongs to the bacterial ribosomal protein bL36 family.

The chain is Large ribosomal subunit protein bL36 from Stenotrophomonas maltophilia (strain R551-3).